A 137-amino-acid chain; its full sequence is Basic phospholipase A2 homolog 2 (137 aa).

Positions 1-16 (MRTLWIMAVLLVGVEG) are cleaved as a signal peptide. Cystine bridges form between C42-C131, C44-C60, C59-C111, C65-C137, C66-C104, C73-C97, and C91-C102. The interval 121–133 (KKYRYYLKPLCKK) is important for membrane-damaging activities in eukaryotes and bacteria; heparin-binding.

It belongs to the phospholipase A2 family. Group II subfamily. K49 sub-subfamily. As to quaternary structure, homodimer; non-covalently linked. Binds to heparin. It binds long-chain fatty acids covalently by a rapid, spontaneous, and autocatalytic process. When acylated, it binds to the surface of liposomes and isolated muscle membranes, with the fatty acid moiety inserted into the lipid bilayer and possibly acting as an anchor. As to expression, expressed by the venom gland.

The protein resides in the secreted. Heparin inhibits the myotoxic activity. Suramin inhibits the myotoxic activity. High level of membrane cholesterol content reduces cytolytic activity, whereas low level of membrane cholesterol content increases cytolytic activity. Functionally, snake venom phospholipase A2 homolog that lacks enzymatic activity. Is myotoxic and induces a dose-dependent edema in the mouse foot pad. Also exhibits strong anticoagulant effects by binding to factor Xa (F10) and inhibiting the prothrombinase activity (IC(50) is 3 nM). In addition, it shows cytotoxic activity to a variety of cell types and bactericidal activity to a variety of Gram-negative and Gram-positive bacteria. Also induces a very rapid release of large amounts of potassium ions and ATP from muscle cells, which accounts for the pain reaction characteristic of viperid envenomations. The released ATP amplifies the effect of the myotoxins, acting as a 'danger signal', which spreads and causes further damage by acting on purinergic receptors. A model of myotoxic mechanism has been proposed: an apo Lys49-PLA2 is activated by the entrance of a hydrophobic molecule (e.g. fatty acid) at the hydrophobic channel of the protein leading to a reorientation of a monomer. This reorientation causes a transition between 'inactive' to 'active' states, causing alignment of C-terminal and membrane-docking sites (MDoS) side-by-side and putting the membrane-disruption sites (MDiS) in the same plane, exposed to solvent and in a symmetric position for both monomers. The MDoS region stabilizes the toxin on membrane by the interaction of charged residues with phospholipid head groups. Subsequently, the MDiS region destabilizes the membrane with penetration of hydrophobic residues. This insertion causes a disorganization of the membrane, allowing an uncontrolled influx of ions (i.e. calcium and sodium), and eventually triggering irreversible intracellular alterations and cell death. This Bothrops asper (Terciopelo) protein is Basic phospholipase A2 homolog 2.